A 208-amino-acid polypeptide reads, in one-letter code: Troponin I, cardiac muscle (208 aa).

3 disordered regions span residues 1-37 (MAEEEEPKPPPLRRKSSANYRGYAVEPHAKRQSKISA), 54-74 (DLEREEQERAGEKQRHLGELC), and 168-208 (VRKD…GGQS). The residue at position 2 (Ala-2) is an N-acetylalanine. Residues 28-73 (HAKRQSKISASRKLQLKTLLLQRAKRDLEREEQERAGEKQRHLGEL) form an involved in binding TNC region. 2 stretches are compositionally biased toward basic and acidic residues: residues 54-71 (DLEREEQERAGEKQRHLG) and 168-187 (VRKDEAEKESREVGDWRKNV).

It belongs to the troponin I family. Binds to actin and tropomyosin.

Functionally, troponin I is the inhibitory subunit of troponin, the thin filament regulatory complex which confers calcium-sensitivity to striated muscle actomyosin ATPase activity. This chain is Troponin I, cardiac muscle (TNNI3), found in Coturnix japonica (Japanese quail).